We begin with the raw amino-acid sequence, 284 residues long: Small ribosomal subunit protein uS2 (284 aa).

It belongs to the universal ribosomal protein uS2 family.

The polypeptide is Small ribosomal subunit protein uS2 (rpsB) (Mycoplasma genitalium (strain ATCC 33530 / DSM 19775 / NCTC 10195 / G37) (Mycoplasmoides genitalium)).